A 426-amino-acid chain; its full sequence is Lactate racemase (426 aa).

72–75 (DHTR) serves as a coordination point for Ni(II)-pyridinium-3,5-bisthiocarboxylate mononucleotide. Residues H108 and H174 each act as proton donor/acceptor in the active site. Positions 184 and 200 each coordinate Ni(II)-pyridinium-3,5-bisthiocarboxylate mononucleotide. Residues Q295 and K298 each contribute to the substrate site.

Belongs to the lactate racemase family. Homodimer. Requires Ni(II)-pyridinium-3,5-bisthiocarboxylate mononucleotide as cofactor.

It catalyses the reaction (S)-lactate = (R)-lactate. With respect to regulation, activation of the apo-enzyme requires the three accessory proteins LarB, LarE and LarC, that are involved in the biosynthesis of the nickel-pincer cofactor of LarA. In terms of biological role, catalyzes the interconversion between the D- and L-isomers of lactate. In Thermoanaerobacterium thermosaccharolyticum (strain ATCC 7956 / DSM 571 / NCIMB 9385 / NCA 3814 / NCTC 13789 / WDCM 00135 / 2032) (Clostridium thermosaccharolyticum), this protein is Lactate racemase.